We begin with the raw amino-acid sequence, 317 residues long: 4-diphosphocytidyl-2-C-methyl-D-erythritol kinase (317 aa).

Residue K11 is part of the active site. Position 99–109 (99–109 (PVAAGLAGGST)) interacts with ATP. D141 is an active-site residue.

Belongs to the GHMP kinase family. IspE subfamily.

The enzyme catalyses 4-CDP-2-C-methyl-D-erythritol + ATP = 4-CDP-2-C-methyl-D-erythritol 2-phosphate + ADP + H(+). Its pathway is isoprenoid biosynthesis; isopentenyl diphosphate biosynthesis via DXP pathway; isopentenyl diphosphate from 1-deoxy-D-xylulose 5-phosphate: step 3/6. Its function is as follows. Catalyzes the phosphorylation of the position 2 hydroxy group of 4-diphosphocytidyl-2C-methyl-D-erythritol. The protein is 4-diphosphocytidyl-2-C-methyl-D-erythritol kinase of Nostoc sp. (strain PCC 7120 / SAG 25.82 / UTEX 2576).